Here is a 100-residue protein sequence, read N- to C-terminus: Urease subunit gamma (100 aa).

The protein belongs to the urease gamma subunit family. As to quaternary structure, heterotrimer of UreA (gamma), UreB (beta) and UreC (alpha) subunits. Three heterotrimers associate to form the active enzyme.

It is found in the cytoplasm. It carries out the reaction urea + 2 H2O + H(+) = hydrogencarbonate + 2 NH4(+). The protein operates within nitrogen metabolism; urea degradation; CO(2) and NH(3) from urea (urease route): step 1/1. The sequence is that of Urease subunit gamma from Burkholderia multivorans (strain ATCC 17616 / 249).